We begin with the raw amino-acid sequence, 2241 residues long: Large tegument protein deneddylase (2241 aa).

Residues 1-238 (MKVTQASCHQ…IDLTGVVRES (238 aa)) are deubiquitination activity. Residues 4–226 (TQASCHQGDI…AARLVSTYRD (223 aa)) form the Peptidase C76 domain. Active-site residues include C24, D160, and H162. The interval 239–314 (ADTAATTTTA…STTSKTLATA (76 aa)) is disordered. The span at 240-250 (DTAATTTTAAP) shows a compositional bias: low complexity. Residues 251–268 (SLPPLPDPIVDPGCPPGV) show a composition bias toward pro residues. Residues 304–314 (PSTTSKTLATA) are compositionally biased toward low complexity. The interval 327 to 331 (SSAVP) is interaction with inner tegument protein. A disordered region spans residues 1170–1229 (RSSQQKMEEQLQETRQQMTETSERLDRSLRQDPGSSSVTRVPEKPFKGQELAGRITPPPA). Residues 1190–1199 (TSERLDRSLR) show a composition bias toward basic and acidic residues.

This sequence belongs to the herpesviridae large tegument protein family. In terms of assembly, interacts with host CUL1 and CUL4A; these interactions inhibit the E3 ligase activity of cullins. Interacts with inner tegument protein. Interacts with capsid vertex specific component CVC2. Interacts with the major capsid protein/MCP.

It is found in the virion tegument. Its subcellular location is the host cytoplasm. The protein resides in the host nucleus. It catalyses the reaction Thiol-dependent hydrolysis of ester, thioester, amide, peptide and isopeptide bonds formed by the C-terminal Gly of ubiquitin (a 76-residue protein attached to proteins as an intracellular targeting signal).. In terms of biological role, large tegument protein that plays multiple roles in the viral cycle. During viral entry, remains associated with the capsid while most of the tegument is detached and participates in the capsid transport toward the host nucleus. Plays a role in the routing of the capsid at the nuclear pore complex and subsequent uncoating. Within the host nucleus, acts as a deneddylase and promotes the degradation of nuclear CRLs (cullin-RING ubiquitin ligases) and thereby stabilizes nuclear CRL substrates, while cytoplasmic CRLs remain unaffected. These modifications prevent host cell cycle S-phase progression and create a favorable environment allowing efficient viral genome replication. Participates later in the secondary envelopment of capsids. Indeed, plays a linker role for the association of the outer viral tegument to the capsids together with the inner tegument protein. The protein is Large tegument protein deneddylase (UL48) of Human cytomegalovirus (strain AD169) (HHV-5).